The chain runs to 205 residues: Small ribosomal subunit protein uS4 (205 aa).

Residues 18 to 46 are disordered; that stretch reads NIWGRPKSPVNRREYGPGQHGQRRKGKLS. In terms of domain architecture, S4 RNA-binding spans 94 to 157; the sequence is RRLDTVVYRA…KQLTFVLEAN (64 aa).

This sequence belongs to the universal ribosomal protein uS4 family. Part of the 30S ribosomal subunit. Contacts protein S5. The interaction surface between S4 and S5 is involved in control of translational fidelity.

Its function is as follows. One of the primary rRNA binding proteins, it binds directly to 16S rRNA where it nucleates assembly of the body of the 30S subunit. With S5 and S12 plays an important role in translational accuracy. The protein is Small ribosomal subunit protein uS4 of Rhodopseudomonas palustris (strain BisB18).